The sequence spans 163 residues: Urease accessory protein UreE (163 aa).

The interval 134-163 (EAGAYGGGHRHHHDDDAPSIRQPARLRIHE) is disordered.

The protein belongs to the UreE family.

It is found in the cytoplasm. In terms of biological role, involved in urease metallocenter assembly. Binds nickel. Probably functions as a nickel donor during metallocenter assembly. The polypeptide is Urease accessory protein UreE (Methylobacillus flagellatus (strain ATCC 51484 / DSM 6875 / VKM B-1610 / KT)).